Reading from the N-terminus, the 364-residue chain is MNIGVFIPIGNNGWLLSENAPQYMPSFELNKQITLKAEQHGLDFVLSMIKLRGFGGKTEFWDHNLESFTLMAGLAAVTSRIKLYATAPTLCLPPAIVARMASTIDSISNGRFGLNLVTGWQRPEYAQMGLWPGDEYFGRRYEYLSEYAQVLRELWETGRSDLKGEFFQMEDCRLSPRPQAEMKIICAGQSTAGMEFTATYADYNFCFGKGVNTPTAFAPTVERLEEAKAKTGRDVSSYVLFMVISDETDEAARAKWEHYKAGADAEAFAWLGLQGAADTKSGADTNIRQMADPTSAVNINMGTLVGSHATVAALLDEVVTVPGTGGVLLVFDDFLKGLDDFGTKIQPLMRSRRHVTGEMLAEVA.

Residues 49–50, asparagine 115, glutamate 124, 140–141, and serine 190 contribute to the FMN site; these read IK and RY.

The protein belongs to the NtaA/SnaA/DszA monooxygenase family. RutA subfamily.

The enzyme catalyses uracil + FMNH2 + NADH + O2 = (Z)-3-ureidoacrylate + FMN + NAD(+) + H2O + H(+). The catalysed reaction is thymine + FMNH2 + NADH + O2 = (Z)-2-methylureidoacrylate + FMN + NAD(+) + H2O + H(+). Its function is as follows. Catalyzes the pyrimidine ring opening between N-3 and C-4 by an unusual flavin hydroperoxide-catalyzed mechanism, adding oxygen atoms in the process to yield ureidoacrylate peracid, that immediately reacts with FMN forming ureidoacrylate and FMN-N(5)-oxide. The FMN-N(5)-oxide reacts spontaneously with NADH to produce FMN. Requires the flavin reductase RutF to regenerate FMN in vivo. The sequence is that of Pyrimidine monooxygenase RutA from Methylorubrum extorquens (strain ATCC 14718 / DSM 1338 / JCM 2805 / NCIMB 9133 / AM1) (Methylobacterium extorquens).